Consider the following 434-residue polypeptide: Monodehydroascorbate reductase, seedling isozyme (434 aa).

Residues 13 to 16 (GGVA), E40, R47, K52, I95, and 146 to 147 (RE) contribute to the FAD site. Residues 171–177 (GGYIGLE), E195, R201, and G260 contribute to the NAD(+) site. 173-177 (YIGLE) contributes to the NADP(+) binding site. 2 residues coordinate NADP(+): R201 and G260. An FAD-binding site is contributed by D297. 313–314 (EH) is a binding site for NAD(+). 313–314 (EH) is an NADP(+) binding site. V315 serves as a coordination point for FAD. Residue R319 coordinates L-ascorbate. An FAD-binding site is contributed by Y348. Residue Y348 participates in NAD(+) binding. Y348 is an NADP(+) binding site. R350 is a binding site for L-ascorbate.

It belongs to the FAD-dependent oxidoreductase family. Requires FAD as cofactor.

It is found in the cytoplasm. It catalyses the reaction 2 monodehydro-L-ascorbate radical + NADH + H(+) = 2 L-ascorbate + NAD(+). Catalyzes the conversion of monodehydroascorbate to ascorbate, oxidizing NADH in the process. In Cucumis sativus (Cucumber), this protein is Monodehydroascorbate reductase, seedling isozyme.